The primary structure comprises 245 residues: Ribosomal RNA large subunit methyltransferase E (245 aa).

The interval 1 to 26 (MTKPPVGSNRSGRKLGQKVKKGKLKA) is disordered. Basic residues predominate over residues 11–26 (SGRKLGQKVKKGKLKA). Gly81, Trp83, Asp104, Asp120, and Asp144 together coordinate S-adenosyl-L-methionine. Residue Lys184 is the Proton acceptor of the active site.

The protein belongs to the class I-like SAM-binding methyltransferase superfamily. RNA methyltransferase RlmE family.

The protein localises to the cytoplasm. It carries out the reaction uridine(2552) in 23S rRNA + S-adenosyl-L-methionine = 2'-O-methyluridine(2552) in 23S rRNA + S-adenosyl-L-homocysteine + H(+). Its function is as follows. Specifically methylates the uridine in position 2552 of 23S rRNA at the 2'-O position of the ribose in the fully assembled 50S ribosomal subunit. The sequence is that of Ribosomal RNA large subunit methyltransferase E from Sinorhizobium medicae (strain WSM419) (Ensifer medicae).